The following is a 105-amino-acid chain: Intracellular chorismate mutase (105 aa).

The Chorismate mutase domain maps to 23 to 105; the sequence is SQPVPEIDTL…LRLGRGRLGH (83 aa). 3 residues coordinate chorismate: Arg-61, Val-70, and Glu-74.

Homodimer. Interacts with AroG.

The protein resides in the cytoplasm. The catalysed reaction is chorismate = prephenate. The protein operates within metabolic intermediate biosynthesis; prephenate biosynthesis; prephenate from chorismate: step 1/1. With respect to regulation, the formation of the complex with AroG activates the chorismate mutase activity. Catalyzes the Claisen rearrangement of chorismate to prephenate. Probably involved in the aromatic amino acid biosynthesis. The protein is Intracellular chorismate mutase of Mycobacterium bovis (strain ATCC BAA-935 / AF2122/97).